Consider the following 216-residue polypeptide: MSDSANSSCIIIAIAGASASGKSLIASTVHRELRDQVGSDDISIISEDCYYKDQSHLDFATRTQTNYDHPNSMDRDLLLEHLRALKAGKSVDIPQYSYVEHTRMKEVTHFTPKKVIILEGILLLTDERVRNELSLSLFVDAPLDICFIRRLKRDMEERGRSLESVIEQYRKTVRPMFLQFIEPSKQYADIIIPRGGKNRIAINMLKAQILHLLGRK.

Glycine 16–serine 23 is a binding site for ATP.

It belongs to the uridine kinase family.

It localises to the cytoplasm. It carries out the reaction uridine + ATP = UMP + ADP + H(+). The enzyme catalyses cytidine + ATP = CMP + ADP + H(+). It functions in the pathway pyrimidine metabolism; CTP biosynthesis via salvage pathway; CTP from cytidine: step 1/3. The protein operates within pyrimidine metabolism; UMP biosynthesis via salvage pathway; UMP from uridine: step 1/1. The protein is Uridine kinase of Mannheimia succiniciproducens (strain KCTC 0769BP / MBEL55E).